Consider the following 476-residue polypeptide: Eukaryotic translation initiation factor 3 subunit L (476 aa).

One can recognise a PCI domain in the interval 257-452; it reads DAIRMFSHIL…DLDYALENDL (196 aa).

Belongs to the eIF-3 subunit L family. In terms of assembly, component of the eukaryotic translation initiation factor 3 (eIF-3) complex.

It is found in the cytoplasm. Component of the eukaryotic translation initiation factor 3 (eIF-3) complex, which is involved in protein synthesis of a specialized repertoire of mRNAs and, together with other initiation factors, stimulates binding of mRNA and methionyl-tRNAi to the 40S ribosome. The eIF-3 complex specifically targets and initiates translation of a subset of mRNAs involved in cell proliferation. In Neosartorya fischeri (strain ATCC 1020 / DSM 3700 / CBS 544.65 / FGSC A1164 / JCM 1740 / NRRL 181 / WB 181) (Aspergillus fischerianus), this protein is Eukaryotic translation initiation factor 3 subunit L.